Consider the following 813-residue polypeptide: Protein translocase subunit SecA 2 (813 aa).

ATP contacts are provided by residues Gln-105, 123-127 (GEGKT), and Asp-525.

The protein belongs to the SecA family. In terms of assembly, monomer and homodimer. Part of the essential Sec protein translocation apparatus which comprises SecA, SecYEG and auxiliary proteins SecDF-YajC and YidC.

Its subcellular location is the cell inner membrane. The protein resides in the cytoplasm. The catalysed reaction is ATP + H2O + cellular proteinSide 1 = ADP + phosphate + cellular proteinSide 2.. Its function is as follows. Part of the Sec protein translocase complex. Interacts with the SecYEG preprotein conducting channel. Has a central role in coupling the hydrolysis of ATP to the transfer of proteins into and across the cell membrane, serving both as a receptor for the preprotein-SecB complex and as an ATP-driven molecular motor driving the stepwise translocation of polypeptide chains across the membrane. This is Protein translocase subunit SecA 2 from Rhodopseudomonas palustris (strain BisA53).